The sequence spans 248 residues: N-acylneuraminate-9-phosphatase (248 aa).

Aspartate 12 lines the Mg(2+) pocket. Phosphate is bound by residues leucine 13, aspartate 14, threonine 131, asparagine 132, and lysine 164. Position 14 (aspartate 14) interacts with Mg(2+). A Mg(2+)-binding site is contributed by aspartate 189.

This sequence belongs to the HAD-like hydrolase superfamily. NANP family. The cofactor is Mg(2+).

It carries out the reaction N-acetylneuraminate 9-phosphate + H2O = N-acetylneuraminate + phosphate. The catalysed reaction is N-glycoloylneuraminate 9-phosphate + H2O = N-glycoloylneuraminate + phosphate. It participates in amino-sugar metabolism; N-acetylneuraminate biosynthesis. With respect to regulation, inhibited by calcium. Inhibited by vanadate, sodium orthovanadate and phosphonate. Its function is as follows. Catalyzes the dephosphorylation of N-acylneuraminate 9-phosphate (Neu5Ac-9-P) to N-acetylneuraminic acid (Neu5Ac or sialic acid). Can also use N-glycoloylneuraminate 9-phosphate as substrate. The chain is N-acylneuraminate-9-phosphatase from Rattus norvegicus (Rat).